The chain runs to 450 residues: UDP-N-acetylmuramoylalanine--D-glutamate ligase (450 aa).

118-124 (GSNGKTT) provides a ligand contact to ATP.

It belongs to the MurCDEF family.

Its subcellular location is the cytoplasm. The catalysed reaction is UDP-N-acetyl-alpha-D-muramoyl-L-alanine + D-glutamate + ATP = UDP-N-acetyl-alpha-D-muramoyl-L-alanyl-D-glutamate + ADP + phosphate + H(+). It participates in cell wall biogenesis; peptidoglycan biosynthesis. Its function is as follows. Cell wall formation. Catalyzes the addition of glutamate to the nucleotide precursor UDP-N-acetylmuramoyl-L-alanine (UMA). This Halalkalibacterium halodurans (strain ATCC BAA-125 / DSM 18197 / FERM 7344 / JCM 9153 / C-125) (Bacillus halodurans) protein is UDP-N-acetylmuramoylalanine--D-glutamate ligase.